The primary structure comprises 299 residues: Phosphatidylserine decarboxylase proenzyme (299 aa).

Active-site charge relay system; for autoendoproteolytic cleavage activity residues include Asp115, His171, and Ser258. The active-site Schiff-base intermediate with substrate; via pyruvic acid; for decarboxylase activity is Ser258. Ser258 carries the post-translational modification Pyruvic acid (Ser); by autocatalysis.

It belongs to the phosphatidylserine decarboxylase family. PSD-B subfamily. Prokaryotic type II sub-subfamily. As to quaternary structure, heterodimer of a large membrane-associated beta subunit and a small pyruvoyl-containing alpha subunit. The cofactor is pyruvate. Is synthesized initially as an inactive proenzyme. Formation of the active enzyme involves a self-maturation process in which the active site pyruvoyl group is generated from an internal serine residue via an autocatalytic post-translational modification. Two non-identical subunits are generated from the proenzyme in this reaction, and the pyruvate is formed at the N-terminus of the alpha chain, which is derived from the carboxyl end of the proenzyme. The autoendoproteolytic cleavage occurs by a canonical serine protease mechanism, in which the side chain hydroxyl group of the serine supplies its oxygen atom to form the C-terminus of the beta chain, while the remainder of the serine residue undergoes an oxidative deamination to produce ammonia and the pyruvoyl prosthetic group on the alpha chain. During this reaction, the Ser that is part of the protease active site of the proenzyme becomes the pyruvoyl prosthetic group, which constitutes an essential element of the active site of the mature decarboxylase.

The protein localises to the cell membrane. The catalysed reaction is a 1,2-diacyl-sn-glycero-3-phospho-L-serine + H(+) = a 1,2-diacyl-sn-glycero-3-phosphoethanolamine + CO2. It participates in phospholipid metabolism; phosphatidylethanolamine biosynthesis; phosphatidylethanolamine from CDP-diacylglycerol: step 2/2. Functionally, catalyzes the formation of phosphatidylethanolamine (PtdEtn) from phosphatidylserine (PtdSer). The sequence is that of Phosphatidylserine decarboxylase proenzyme from Chlamydia felis (strain Fe/C-56) (Chlamydophila felis).